The chain runs to 411 residues: MLSFSRARSQGRNTRPLGGGMEYLEPKRKSNVMGKIILVVSLTALCIFMLKHAPSFTSPTAFSRSEEGVTHVLVTGGAGYIGSHAALRLLKDSYRVTIVDNLSRGNLGAVKVLQGLFPEPGRLQFIYADLGDAKAVDKIFSENAFDAVMHFAAVAYVGESTLDPLKYYHNITSNTLVVLEAVARHKVKKLIYSSTCATYGEPDKMPIVEVTPQVPINPYGKAKKMAEDMILDFSKNSDMAVMILRYFNVIGSDPEGRLGEAPKPELREHGRISGACFDAARGVIPGLQVKGTDYKTGDGTCVRDYIDVTDLVDAHVKALEKAKPRNVGIYNVGTGKGRSVKEFVEACKKATGVDIKVDFLPRRPGDYAEVYSDPAKILRDLNWSARYTNLQESLEVAWKWQKTHPHGYASS.

The segment covering 1–13 (MLSFSRARSQGRN) has biased composition (polar residues). Residues 1-22 (MLSFSRARSQGRNTRPLGGGME) are disordered. Residues 1 to 31 (MLSFSRARSQGRNTRPLGGGMEYLEPKRKSN) are Cytoplasmic-facing. Residues 32–50 (VMGKIILVVSLTALCIFML) traverse the membrane as a helical; Signal-anchor for type II membrane protein segment. At 51–411 (KHAPSFTSPT…KTHPHGYASS (361 aa)) the chain is on the lumenal side. An NAD(+)-binding site is contributed by 71-102 (HVLVTGGAGYIGSHAALRLLKDSYRVTIVDNL). The Proton acceptor role is filled by Tyr219.

This sequence belongs to the NAD(P)-dependent epimerase/dehydratase family. The cofactor is NAD(+).

Its subcellular location is the golgi apparatus. The protein resides in the golgi stack membrane. The enzyme catalyses UDP-beta-L-arabinopyranose = UDP-alpha-D-xylose. Its pathway is nucleotide-sugar biosynthesis; UDP-L-arabinose biosynthesis; UDP-L-arabinose from UDP-alpha-D-xylose: step 1/1. It functions in the pathway cell wall biogenesis; cell wall polysaccharide biosynthesis. The protein is Probable UDP-arabinose 4-epimerase 3 of Arabidopsis thaliana (Mouse-ear cress).